A 397-amino-acid polypeptide reads, in one-letter code: Decapping and exoribonuclease protein (397 aa).

Substrate-binding positions include Arg-58, Glu-101, and 131 to 133 (WRG). Glu-192 contacts Mg(2+). 2 residues coordinate substrate: Cys-217 and Glu-234. The Mg(2+) site is built by Glu-234, Asp-236, Glu-253, and Leu-254. Substrate-binding residues include Lys-255 and Gln-280. Thr-392 is modified (phosphothreonine). Position 394 is a phosphoserine (Ser-394).

Belongs to the DXO/Dom3Z family. Mg(2+) is required as a cofactor.

It localises to the nucleus. It carries out the reaction a 5'-end triphospho-ribonucleoside in mRNA + H2O = a 5'-end phospho-ribonucleoside in mRNA + diphosphate + H(+). The enzyme catalyses a 5'-end NAD(+)-phospho-ribonucleoside in mRNA + H2O = a 5'-end phospho-ribonucleoside in mRNA + NAD(+) + H(+). The catalysed reaction is a 5'-end NAD(+)-phospho-ribonucleoside in snoRNA + H2O = a 5'-end phospho-ribonucleoside in snoRNA + NAD(+) + H(+). It catalyses the reaction a 5'-end (N(7)-methyl 5'-triphosphoguanosine)-ribonucleoside-ribonucleotide in mRNA + H2O = a (N(7)-methyl 5'-triphosphoguanosine)-nucleoside + a 5'-end phospho-ribonucleoside in mRNA + H(+). It carries out the reaction a 5'-end FAD-phospho-ribonucleoside in mRNA + H2O = a 5'-end phospho-ribonucleoside in mRNA + FAD + H(+). The enzyme catalyses a 5'-end CoA-ribonucleoside in mRNA + H2O = 3'-dephospho-CoA + a 5'-end phospho-ribonucleoside in mRNA + H(+). Functionally, decapping enzyme for NAD-capped RNAs: specifically hydrolyzes the nicotinamide adenine dinucleotide (NAD) cap from a subset of RNAs by removing the entire NAD moiety from the 5'-end of an NAD-capped RNA. The NAD-cap is present at the 5'-end of some RNAs and snoRNAs. In contrast to the canonical 5'-end N7 methylguanosine (m7G) cap, the NAD cap promotes mRNA decay. Preferentially acts on NAD-capped transcripts in response to environmental stress. Also acts as a non-canonical decapping enzyme that removes the entire cap structure of m7G capped or incompletely capped RNAs and mediates their subsequent degradation. Specifically degrades pre-mRNAs with a defective 5'-end m7G cap and is part of a pre-mRNA capping quality control. Has decapping activity toward incomplete 5'-end m7G cap mRNAs such as unmethylated 5'-end-capped RNA (cap0), while it has no activity toward 2'-O-ribose methylated m7G cap (cap1). In contrast to canonical decapping enzymes DCP2 and NUDT16, which cleave the cap within the triphosphate linkage, the decapping activity releases the entire cap structure GpppN and a 5'-end monophosphate RNA. Also has 5'-3' exoribonuclease activities: The 5'-end monophosphate RNA is then degraded by the 5'-3' exoribonuclease activity, enabling this enzyme to decap and degrade incompletely capped mRNAs. Also possesses RNA 5'-pyrophosphohydrolase activity by hydrolyzing the 5'-end triphosphate to release pyrophosphates. Exhibits decapping activity towards FAD-capped RNAs. Exhibits decapping activity towards dpCoA-capped RNAs in vitro. The sequence is that of Decapping and exoribonuclease protein from Rattus norvegicus (Rat).